Reading from the N-terminus, the 500-residue chain is Palmitoleoyl-protein carboxylesterase notum1a (500 aa).

Residues 1 to 26 (MKRSLWVMQVLHWAVMLALVQCGALG) form the signal peptide. Asn-101 carries an N-linked (GlcNAc...) asparagine glycan. Catalysis depends on charge relay system residues Ser-237, Asp-344, and His-393.

Belongs to the pectinacetylesterase family. Notum subfamily.

The protein localises to the secreted. The catalysed reaction is [Wnt protein]-O-(9Z)-hexadecenoyl-L-serine + H2O = [Wnt protein]-L-serine + (9Z)-hexadecenoate + H(+). Its function is as follows. Carboxylesterase that acts as a key negative regulator of the Wnt signaling pathway. Acts by specifically mediating depalmitoleoylation of WNT proteins. Serine palmitoleoylation of WNT proteins is required for efficient binding to frizzled receptors. This chain is Palmitoleoyl-protein carboxylesterase notum1a, found in Danio rerio (Zebrafish).